A 387-amino-acid chain; its full sequence is Succinyl-diaminopimelate desuccinylase (387 aa).

Residue His-73 participates in Zn(2+) binding. Asp-75 is a catalytic residue. Asp-106 contributes to the Zn(2+) binding site. Residue Glu-141 is the Proton acceptor of the active site. Zn(2+)-binding residues include Glu-142, Glu-170, and His-359.

The protein belongs to the peptidase M20A family. DapE subfamily. As to quaternary structure, homodimer. Requires Zn(2+) as cofactor. It depends on Co(2+) as a cofactor.

It carries out the reaction N-succinyl-(2S,6S)-2,6-diaminopimelate + H2O = (2S,6S)-2,6-diaminopimelate + succinate. Its pathway is amino-acid biosynthesis; L-lysine biosynthesis via DAP pathway; LL-2,6-diaminopimelate from (S)-tetrahydrodipicolinate (succinylase route): step 3/3. Its function is as follows. Catalyzes the hydrolysis of N-succinyl-L,L-diaminopimelic acid (SDAP), forming succinate and LL-2,6-diaminopimelate (DAP), an intermediate involved in the bacterial biosynthesis of lysine and meso-diaminopimelic acid, an essential component of bacterial cell walls. This is Succinyl-diaminopimelate desuccinylase from Methylorubrum populi (strain ATCC BAA-705 / NCIMB 13946 / BJ001) (Methylobacterium populi).